Here is a 178-residue protein sequence, read N- to C-terminus: Large ribosomal subunit protein uL6 (178 aa).

The protein belongs to the universal ribosomal protein uL6 family. Part of the 50S ribosomal subunit.

Its function is as follows. This protein binds to the 23S rRNA, and is important in its secondary structure. It is located near the subunit interface in the base of the L7/L12 stalk, and near the tRNA binding site of the peptidyltransferase center. In Staphylococcus aureus (strain Mu3 / ATCC 700698), this protein is Large ribosomal subunit protein uL6.